The chain runs to 271 residues: Aquaporin-11 (271 aa).

The Cytoplasmic portion of the chain corresponds to 1-14 (MSPLLGLRSELQDT). Residues 15–35 (CTSLGLMLSVVLLMGLARVVA) form a helical membrane-spanning segment. At 36 to 41 (RQQLHR) the chain is on the lumenal side. Residues 42–62 (PVAHAFVLEFLATFQLCCCTH) form a helical membrane-spanning segment. Topologically, residues 63 to 74 (ELQLLSEQHPAH) are cytoplasmic. The helical transmembrane segment at 75-95 (PTWTLTLVYFFSLVHGLTLVG) threads the bilayer. At 96 to 163 (TSSNPCGVMM…ACKNPIRVDL (68 aa)) the chain is on the lumenal side. The short motif at 99 to 101 (NPC) is the NPC element. The helical transmembrane segment at 164 to 184 (LKAVITEAVCSFLFHSALLHF) threads the bilayer. At 185 to 194 (QEVRTKLRIH) the chain is on the cytoplasmic side. The chain crosses the membrane as a helical span at residues 195–215 (LLAALITFLVYAGGSLTGAVF). The NPA signature appears at 216–218 (NPA). The Lumenal segment spans residues 216–234 (NPALALSLHFMCFDEAFPQ). A helical transmembrane segment spans residues 235-255 (FFIVYWLAPSLGILLMILMFS). The Cytoplasmic segment spans residues 256 to 271 (FFLPWLHNNHTINKKE).

This sequence belongs to the MIP/aquaporin (TC 1.A.8) family. AQP11/AQP12 subfamily. Homodimer; disulfide-linked. Homotetramer. Can also form homomultimer. In terms of processing, not glycosylated. Detected in the sperm head and tail (at protein level). Expressed in subcutaneous adipocytes. Expressed in testis, kidney and ejaculated spermatozoa.

It is found in the endoplasmic reticulum membrane. The protein resides in the cytoplasmic vesicle membrane. The protein localises to the cell membrane. It carries out the reaction H2O(in) = H2O(out). It catalyses the reaction glycerol(in) = glycerol(out). The catalysed reaction is H2O2(out) = H2O2(in). Its function is as follows. Channel protein that facilitates the transport of water, glycerol and hydrogen peroxide across membrane of cell or organelles guaranteeing intracellular homeostasis in several organes like liver, kidney and brain. In situation of stress, participates in endoplasmic reticulum (ER) homeostasis by regulating redox homeostasis through the transport of hydrogen peroxide across the endoplasmic reticulum membrane thereby regulating the oxidative stress through the NADPH oxidase 2 pathway. Plays a role by maintaining an environment suitable for translation or protein foldings in the ER lumen namely by participating in the PKD1 glycosylation processing resulting in regulation of PKD1 membrane trafficking thereby preventing the accumulation of unfolding protein in ER. Plays a role in the proximal tubule function by regulating its endosomal acidification. May play a role in postnatal kidney development. This chain is Aquaporin-11, found in Homo sapiens (Human).